Consider the following 142-residue polypeptide: Large ribosomal subunit protein uL11 (142 aa).

It belongs to the universal ribosomal protein uL11 family. Part of the ribosomal stalk of the 50S ribosomal subunit. Interacts with L10 and the large rRNA to form the base of the stalk. L10 forms an elongated spine to which L12 dimers bind in a sequential fashion forming a multimeric L10(L12)X complex. In terms of processing, one or more lysine residues are methylated.

Functionally, forms part of the ribosomal stalk which helps the ribosome interact with GTP-bound translation factors. This chain is Large ribosomal subunit protein uL11, found in Akkermansia muciniphila (strain ATCC BAA-835 / DSM 22959 / JCM 33894 / BCRC 81048 / CCUG 64013 / CIP 107961 / Muc).